A 145-amino-acid chain; its full sequence is Transcription antitermination protein NusB (145 aa).

This sequence belongs to the NusB family.

Involved in transcription antitermination. Required for transcription of ribosomal RNA (rRNA) genes. Binds specifically to the boxA antiterminator sequence of the ribosomal RNA (rrn) operons. This Thiobacillus denitrificans (strain ATCC 25259 / T1) protein is Transcription antitermination protein NusB.